Reading from the N-terminus, the 763-residue chain is Transferrin receptor protein 1 (763 aa).

At 1-67 (MMDQARSAFS…KPKRFNGRLC (67 aa)) the chain is on the cytoplasmic side. The tract at residues 1–67 (MMDQARSAFS…KPKRFNGRLC (67 aa)) is mediates interaction with SH3BP4. S10 and S19 each carry phosphoserine. Y20 bears the Phosphotyrosine mark. Residues 20-23 (YTRF) carry the Endocytosis signal motif. Residue T21 is modified to Phosphothreonine. The residue at position 24 (S24) is a Phosphoserine. The Stop-transfer sequence signature appears at 58–61 (KPKR). The S-palmitoyl cysteine moiety is linked to residue C67. The helical; Signal-anchor for type II membrane protein transmembrane segment at 68–88 (FAAIALVIFFLIGFMSGYLGY) threads the bilayer. Residues 89-763 (CKRVEQKEEC…GDIWNIDNEF (675 aa)) lie on the Extracellular side of the membrane. Residue T104 is glycosylated (O-linked (GalNAc...) threonine). Residues 225 to 315 (SKPTEVSGKL…GTGDPYTPGF (91 aa)) form the PA domain. N-linked (GlcNAc...) asparagine glycans are attached at residues N253 and N319. Residues 572 to 763 (RLDTYEALTQ…GDIWNIDNEF (192 aa)) form a ligand-binding region. Residues 649–651 (RGD) carry the Cell attachment site motif. N725 and N730 each carry an N-linked (GlcNAc...) asparagine glycan.

This sequence belongs to the peptidase M28 family. M28B subfamily. As to quaternary structure, homodimer; disulfide-linked. Binds one transferrin molecule per subunit. Interacts with SH3BP4. Interacts with STEAP3; facilitates TFRC endocytosis in erythroid precursor cells. In terms of processing, stearoylated by ZDHHC6 which inhibits TFRC-mediated activation of the JNK pathway and promotes mitochondrial fragmentation. Stearoylation does not affect iron uptake. Post-translationally, N- and O-glycosylated, phosphorylated and palmitoylated.

The protein resides in the cell membrane. It localises to the melanosome. Functionally, cellular uptake of iron occurs via receptor-mediated endocytosis of ligand-occupied transferrin receptor into specialized endosomes. Endosomal acidification leads to iron release. The apotransferrin-receptor complex is then recycled to the cell surface with a return to neutral pH and the concomitant loss of affinity of apotransferrin for its receptor. Transferrin receptor is necessary for development of erythrocytes and the nervous system. Upon stimulation, positively regulates T and B cell proliferation through iron uptake. Acts as a lipid sensor that regulates mitochondrial fusion by regulating activation of the JNK pathway. When dietary levels of stearate (C18:0) are low, promotes activation of the JNK pathway, resulting in HUWE1-mediated ubiquitination and subsequent degradation of the mitofusin MFN2 and inhibition of mitochondrial fusion. When dietary levels of stearate (C18:0) are high, TFRC stearoylation inhibits activation of the JNK pathway and thus degradation of the mitofusin MFN2. Mediates uptake of NICOL1 into fibroblasts where it may regulate extracellular matrix production. The protein is Transferrin receptor protein 1 (Tfrc) of Mus musculus (Mouse).